Here is a 108-residue protein sequence, read N- to C-terminus: Large ribosomal subunit protein uL24 (108 aa).

Belongs to the universal ribosomal protein uL24 family. Part of the 50S ribosomal subunit.

Its function is as follows. One of two assembly initiator proteins, it binds directly to the 5'-end of the 23S rRNA, where it nucleates assembly of the 50S subunit. Functionally, one of the proteins that surrounds the polypeptide exit tunnel on the outside of the subunit. This chain is Large ribosomal subunit protein uL24, found in Geobacter sulfurreducens (strain ATCC 51573 / DSM 12127 / PCA).